Reading from the N-terminus, the 85-residue chain is Mitochondrial protein pet191 homolog (85 aa).

Positions 18–61 (HSDCMFVKKKSARECLKNKDELPEECKNLIEAYGECKRQMLDMT) constitute a CHCH domain. A Cx10C motif motif is present at residues 21–32 (CMFVKKKSAREC). Disulfide bonds link cysteine 21/cysteine 53 and cysteine 32/cysteine 43. Positions 43-53 (CKNLIEAYGEC) match the Cx9C motif motif. Residues 65 to 85 (RIAPEKNTDQDTEKPSNVDEQ) are disordered.

It belongs to the PET191 family.

Its subcellular location is the mitochondrion. In terms of biological role, involved in the assembly of cytochrome c oxidase. The sequence is that of Mitochondrial protein pet191 homolog from Schizosaccharomyces pombe (strain 972 / ATCC 24843) (Fission yeast).